The primary structure comprises 369 residues: Small RNA 2'-O-methyltransferase (369 aa).

3 residues coordinate S-adenosyl-L-methionine: S39, D57, and S93. Mg(2+) contacts are provided by E111, E114, H115, and H161.

The protein belongs to the methyltransferase superfamily. HEN1 family. Mg(2+) is required as a cofactor.

It is found in the cytoplasm. The catalysed reaction is small RNA 3'-end nucleotide + S-adenosyl-L-methionine = small RNA 3'-end 2'-O-methylnucleotide + S-adenosyl-L-homocysteine + H(+). Functionally, methyltransferase that adds a 2'-O-methyl group at the 3'-end of piRNAs, a class of 24 to 30 nucleotide RNAs that are generated by a Dicer-independent mechanism and are primarily derived from transposons and other repeated sequence elements. This probably protects the 3'-end of piRNAs from uridylation activity and subsequent degradation. Stabilization of piRNAs is essential for gametogenesis. This chain is Small RNA 2'-O-methyltransferase (henmt1), found in Xenopus tropicalis (Western clawed frog).